We begin with the raw amino-acid sequence, 212 residues long: uncharacterized protein (212 aa).

The interval 97–151 (SDASEAKNDDRRSDGRFALYSVSDTPETTTASRSADRSTNPKTAKHPKSAAKPTV) is disordered. Residues 100–111 (SEAKNDDRRSDG) show a composition bias toward basic and acidic residues.

This is an uncharacterized protein from Mycobacterium tuberculosis (strain CDC 1551 / Oshkosh).